Reading from the N-terminus, the 473-residue chain is tRNA-2-methylthio-N(6)-dimethylallyladenosine synthase (473 aa).

The region spanning 3-120 (MKLHVKTWGC…LPEMIKEVQE (118 aa)) is the MTTase N-terminal domain. Cysteine 12, cysteine 49, cysteine 83, cysteine 157, cysteine 161, and cysteine 164 together coordinate [4Fe-4S] cluster. The Radical SAM core domain occupies 143–375 (KADGATAFVS…QDRIQQQSQG (233 aa)). The region spanning 378–441 (RKMVGSVQRI…TNSIRGKFIR (64 aa)) is the TRAM domain.

The protein belongs to the methylthiotransferase family. MiaB subfamily. Monomer. It depends on [4Fe-4S] cluster as a cofactor.

It localises to the cytoplasm. The catalysed reaction is N(6)-dimethylallyladenosine(37) in tRNA + (sulfur carrier)-SH + AH2 + 2 S-adenosyl-L-methionine = 2-methylsulfanyl-N(6)-dimethylallyladenosine(37) in tRNA + (sulfur carrier)-H + 5'-deoxyadenosine + L-methionine + A + S-adenosyl-L-homocysteine + 2 H(+). Catalyzes the methylthiolation of N6-(dimethylallyl)adenosine (i(6)A), leading to the formation of 2-methylthio-N6-(dimethylallyl)adenosine (ms(2)i(6)A) at position 37 in tRNAs that read codons beginning with uridine. This Psychromonas ingrahamii (strain DSM 17664 / CCUG 51855 / 37) protein is tRNA-2-methylthio-N(6)-dimethylallyladenosine synthase.